A 330-amino-acid chain; its full sequence is D-lactate dehydrogenase (330 aa).

Residues 156 to 157 (RI), D176, 206 to 207 (VP), 233 to 235 (AAR), and D259 each bind NAD(+). Residue R235 is part of the active site. E264 is a catalytic residue. H296 (proton donor) is an active-site residue.

Belongs to the D-isomer specific 2-hydroxyacid dehydrogenase family.

The catalysed reaction is (R)-lactate + NAD(+) = pyruvate + NADH + H(+). The protein is D-lactate dehydrogenase (ldhD) of Staphylococcus epidermidis (strain ATCC 35984 / DSM 28319 / BCRC 17069 / CCUG 31568 / BM 3577 / RP62A).